Reading from the N-terminus, the 291-residue chain is Diaminopimelate epimerase (291 aa).

Substrate is bound by residues Asn-13, Gln-46, and Asn-66. Cys-75 functions as the Proton donor in the catalytic mechanism. Substrate is bound by residues 76–77 (GN), Asn-170, Asn-203, and 221–222 (ER). Cys-230 (proton acceptor) is an active-site residue. 231–232 (GS) is a substrate binding site.

Belongs to the diaminopimelate epimerase family. In terms of assembly, homodimer.

The protein localises to the cytoplasm. It catalyses the reaction (2S,6S)-2,6-diaminopimelate = meso-2,6-diaminopimelate. It functions in the pathway amino-acid biosynthesis; L-lysine biosynthesis via DAP pathway; DL-2,6-diaminopimelate from LL-2,6-diaminopimelate: step 1/1. In terms of biological role, catalyzes the stereoinversion of LL-2,6-diaminopimelate (L,L-DAP) to meso-diaminopimelate (meso-DAP), a precursor of L-lysine and an essential component of the bacterial peptidoglycan. The sequence is that of Diaminopimelate epimerase from Albidiferax ferrireducens (strain ATCC BAA-621 / DSM 15236 / T118) (Rhodoferax ferrireducens).